A 65-amino-acid polypeptide reads, in one-letter code: UPF0337 protein PA4738 (65 aa).

Belongs to the UPF0337 (CsbD) family.

This chain is UPF0337 protein PA4738, found in Pseudomonas aeruginosa (strain ATCC 15692 / DSM 22644 / CIP 104116 / JCM 14847 / LMG 12228 / 1C / PRS 101 / PAO1).